A 1712-amino-acid polypeptide reads, in one-letter code: Latent-transforming growth factor beta-binding protein 1 (1712 aa).

An N-terminal signal peptide occupies residues 1–20; it reads MAGAWLRWGLLLWAGLLAWS. Positions 63 to 148 are disordered; that stretch reads SSTATSSRSL…QDTQSSGGSR (86 aa). Residues 136 to 147 are compositionally biased toward polar residues; the sequence is KVQQDTQSSGGS. The 33-residue stretch at 181-213 folds into the EGF-like 1 domain; it reads TKPSCVPPCQNGGMCLRPQFCVCKPGTKGKACE. Cystine bridges form between cysteine 185-cysteine 195, cysteine 189-cysteine 201, and cysteine 203-cysteine 212. Residues asparagine 339 and asparagine 370 are each glycosylated (N-linked (GlcNAc...) asparagine). The region spanning 391–423 is the EGF-like 2 domain; the sequence is RVVICHLPCMNGGQCSSRDKCQCPPNFTGKLCQ. 6 cysteine pairs are disulfide-bonded: cysteine 395-cysteine 405, cysteine 399-cysteine 411, cysteine 413-cysteine 422, cysteine 551-cysteine 573, cysteine 560-cysteine 586, and cysteine 574-cysteine 589. An N-linked (GlcNAc...) asparagine glycan is attached at asparagine 416. The TB 1 domain maps to 549-601; sequence GRCFQETIGSQCGKALPGLSKQEDCCGTVGTSWGFNKCQKCPKKQSYHGYTQM. N-linked (GlcNAc...) asparagine glycosylation occurs at asparagine 612. The EGF-like 3; calcium-binding domain occupies 618-658; that stretch reads DINECQLQGVCPNGECLNTMGSYRCSCKMGFGPDPTFSSCV. Disulfide bonds link cysteine 622–cysteine 633, cysteine 628–cysteine 642, cysteine 644–cysteine 657, cysteine 671–cysteine 694, cysteine 681–cysteine 706, cysteine 695–cysteine 709, and cysteine 696–cysteine 721. O-linked (Glc) serine glycosylation occurs at serine 639. The region spanning 669–721 is the TB 2 domain; it reads GPCYRLVSPGRQCMHPLSVHLTKQICCCSVGKAWGPQCEKCPLPGTAAFKEIC. The disordered stretch occupies residues 752–803; that stretch reads KNTQPVAKSTHPPPLPAKEEPVEALTSSREHGPGVAEPEVVTAPPEKEIPSL. Threonine 761 and threonine 793 each carry an O-linked (GalNAc...) threonine glycan. The EGF-like 4; calcium-binding domain maps to 865-906; that stretch reads EINECTVNPDICGAGHCINLPVRYTCICYEGYKFSEQQRKCI. 37 disulfides stabilise this stretch: cysteine 869–cysteine 881, cysteine 876–cysteine 890, cysteine 892–cysteine 905, cysteine 911–cysteine 923, cysteine 918–cysteine 932, cysteine 934–cysteine 947, cysteine 953–cysteine 964, cysteine 959–cysteine 973, cysteine 976–cysteine 988, cysteine 994–cysteine 1005, cysteine 1000–cysteine 1014, cysteine 1017–cysteine 1028, cysteine 1034–cysteine 1045, cysteine 1040–cysteine 1054, cysteine 1056–cysteine 1069, cysteine 1075–cysteine 1086, cysteine 1081–cysteine 1095, cysteine 1097–cysteine 1110, cysteine 1116–cysteine 1127, cysteine 1122–cysteine 1136, cysteine 1138–cysteine 1151, cysteine 1157–cysteine 1169, cysteine 1164–cysteine 1178, cysteine 1180–cysteine 1192, cysteine 1198–cysteine 1210, cysteine 1204–cysteine 1219, cysteine 1221–cysteine 1234, cysteine 1240–cysteine 1252, cysteine 1246–cysteine 1261, cysteine 1263–cysteine 1276, cysteine 1282–cysteine 1294, cysteine 1289–cysteine 1303, cysteine 1305–cysteine 1319, cysteine 1340–cysteine 1363, cysteine 1350–cysteine 1375, cysteine 1364–cysteine 1380, and cysteine 1365–cysteine 1392. The region spanning 907–948 is the EGF-like 5; calcium-binding domain; the sequence is DIDECAQAQHLCSQGRCENTEGSFLCICPAGFIASEEGSNCI. Serine 929 carries an O-linked (Glc) serine glycan. The EGF-like 6; calcium-binding domain maps to 949 to 989; the sequence is DVDECLRPDVCRDGRCINTAGAFRCEYCDSGYRMSRRGHCE. At asparagine 966 the chain carries (3R)-3-hydroxyasparagine. The EGF-like 7; calcium-binding domain maps to 990–1029; the sequence is DIDECLTPSTCPEEQCVNSPGSYQCVPCTEGFRGWNGQCL. Serine 1011 carries an O-linked (Glc) serine glycan. The EGF-like 8; calcium-binding domain occupies 1030-1070; it reads DVDECLQPKVCTNGSCTNLEGSYMCSCHKGYSPTPDHRHCQ. N-linked (GlcNAc...) asparagine glycosylation occurs at asparagine 1042. O-linked (Glc) serine glycosylation is present at serine 1051. An EGF-like 9; calcium-binding domain is found at 1071 to 1111; sequence DIDECQQGNLCMNGQCKNTDGSFRCTCGQGYQLSAAKDQCE. The EGF-like 10; calcium-binding domain occupies 1112-1152; the sequence is DIDECEHRHLCSHGQCRNTEGSFQCLCNQGYRASVLGDHCE. (3R)-3-hydroxyasparagine is present on asparagine 1129. An O-linked (Glc) serine glycan is attached at serine 1133. One can recognise an EGF-like 11; calcium-binding domain in the interval 1153–1193; that stretch reads DINECLEDSSVCQGGDCINTAGSYDCTCPDGLQLNDNKGCQ. One can recognise an EGF-like 12; calcium-binding domain in the interval 1194 to 1235; that stretch reads DINECAQPGLCAPHGECLNTQGSFHCVCEQGFSISADGRTCE. A glycan (O-linked (Glc) serine) is linked at serine 1216. The 42-residue stretch at 1236-1277 folds into the EGF-like 13; calcium-binding domain; the sequence is DIDECVNNTVCDSHGFCDNTAGSFRCLCYQGFQAPQDGQGCV. Asparagine 1242 carries N-linked (GlcNAc...) asparagine glycosylation. The region spanning 1278 to 1320 is the EGF-like 14; calcium-binding domain; that stretch reads DVNECELLSGVCGEAFCENVEGSFLCVCADENQEYSPMTGQCR. Residues 1335–1402 form an 8-Cys3 region region; sequence EEKKECYYNL…PRGKGFVPAG (68 aa). One can recognise a TB 3 domain in the interval 1338–1392; that stretch reads KECYYNLNDASLCDNVLAPNVTKQECCCTSGAGWGDNCEIFPCPVQGTAEFSEMC. Asparagine 1357 is a glycosylation site (N-linked (GlcNAc...) asparagine). Phosphoserine is present on serine 1405. Residues 1415–1457 enclose the EGF-like 15; calcium-binding domain; the sequence is DADECLLFGEEICKNGYCLNTQPGYECYCKEGTYYDPVKLQCF. Cystine bridges form between cysteine 1419–cysteine 1432, cysteine 1427–cysteine 1441, cysteine 1443–cysteine 1456, cysteine 1462–cysteine 1473, cysteine 1468–cysteine 1482, cysteine 1484–cysteine 1497, cysteine 1517–cysteine 1541, cysteine 1527–cysteine 1553, cysteine 1542–cysteine 1556, and cysteine 1543–cysteine 1568. The 41-residue stretch at 1458–1498 folds into the EGF-like 16; calcium-binding domain; that stretch reads DMDECQDPNSCIDGQCVNTEGSYNCFCTHPMVLDASEKRCV. O-linked (Glc) serine glycosylation is present at serine 1479. The interval 1498–1712 is C-terminal domain; the sequence is VQPTESNEQI…LNLDKDSDLE (215 aa). A TB 4 domain is found at 1515–1568; sequence DLCWEHLSEEYVCSRPLVGKQTTYTECCCLYGEAWGMQCALCPMKDSDDYAQLC. Residues serine 1588 and serine 1607 each carry the phosphoserine modification. The 41-residue stretch at 1612 to 1652 folds into the EGF-like 17 domain; that stretch reads QAEECGILNGCENGRCVRVQEGYTCDCFDGYHLDMAKMTCV. 6 cysteine pairs are disulfide-bonded: cysteine 1616–cysteine 1627, cysteine 1622–cysteine 1636, cysteine 1638–cysteine 1651, cysteine 1657–cysteine 1672, cysteine 1667–cysteine 1681, and cysteine 1683–cysteine 1696. The 45-residue stretch at 1653–1697 folds into the EGF-like 18; calcium-binding domain; the sequence is DVNECSELNNRMSLCKNAKCINTEGSYKCVCLPGYVPSDKPNYCT. Serine 1678 carries an O-linked (Glc) serine glycan.

The protein belongs to the LTBP family. In terms of assembly, interacts with TGFB1; associates via disulfide bonds with the Latency-associated peptide chain (LAP) regulatory chain of TGFB1, leading to regulate activation of TGF-beta-1. LTBP1 does not bind directly to TGF-beta-1, the active chain of TGFB1. Interacts (via C-terminal domain) with FBN1 (via N-terminal domain). Interacts with FBN2. Interacts with ADAMTSL2. Interacts with EFEMP2. In terms of processing, contains hydroxylated asparagine residues. Post-translationally, two intrachain disulfide bonds from the TB3 domain are rearranged upon TGFB1 binding, and form interchain bonds with TGFB1 propeptide, anchoring it to the extracellular matrix. O-glycosylated on serine residues by POGLUT2 and POGLUT3.

The protein resides in the secreted. It localises to the extracellular space. It is found in the extracellular matrix. Its function is as follows. Key regulator of transforming growth factor beta (TGFB1, TGFB2 and TGFB3) that controls TGF-beta activation by maintaining it in a latent state during storage in extracellular space. Associates specifically via disulfide bonds with the Latency-associated peptide (LAP), which is the regulatory chain of TGF-beta, and regulates integrin-dependent activation of TGF-beta. Outcompeted by LRRC32/GARP for binding to LAP regulatory chain of TGF-beta. In Rattus norvegicus (Rat), this protein is Latent-transforming growth factor beta-binding protein 1 (Ltbp1).